Here is a 714-residue protein sequence, read N- to C-terminus: Phenylalanine 2-monooxygenase precursor (714 aa).

Positions 1 to 15 (MGVTVIPRLLGLKDE) are cleaved as a propeptide — removed in mature form; occupies the channel of the substrate amino acid from the outside of the protein to the interior flavin ring in the precursor. FAD-binding positions include G2, G68, and 95-96 (EA). Positions 108–109 (IK) are cleaved as a propeptide — linker peptide. Residues R120, 141–144 (GAMR), and V375 each bind FAD. Residue R144 coordinates substrate. Substrate is bound at residue Y537. FAD-binding positions include 652–653 (SD) and 660–662 (GWL). Residue G660 coordinates substrate.

Belongs to the phenylalanine 2-monooxygenase family. In terms of assembly, heterotetramer composed of 2 alpha and 2 beta subunits. FAD serves as cofactor. In terms of processing, proteolytically cleaved to yield the active enzyme. Cleavage of the linkage between the 2 subunits causes reshaping of the oxygen channel and the hydrophobic environment around the flavin ring. Removal of the prosequence causes opening of the amino acid channel.

The catalysed reaction is L-phenylalanine + O2 = 2-phenylacetamide + CO2 + H2O. Functionally, catalyzes both oxygenative decarboxylation and oxidative deamination, depending on the substrate used. Has high activity for L-Phe and L-Tyr, but relatively low activities for L-Met and L-Trp. L-Phe is mainly oxygenated and L-Met is mainly oxidized. The chain is Phenylalanine 2-monooxygenase precursor from Pseudomonas sp.